A 567-amino-acid polypeptide reads, in one-letter code: TNF receptor-associated factor 3 (567 aa).

The tract at residues 1-26 is disordered; sequence MESSKKMDAAGTLQPNPPLKLQPDRG. Cys-55 is covalently cross-linked (Glycyl cysteine thioester (Cys-Gly) (interchain with G-Cter in ubiquitin)). The RING-type zinc-finger motif lies at 67–76; sequence CGHRFCESCM. A Glycyl lysine isopeptide (Lys-Gly) (interchain with G-Cter in ubiquitin) cross-link involves residue Lys-106. Residue Cys-123 forms a Glycyl cysteine thioester (Cys-Gly) (interchain with G-Cter in ubiquitin) linkage. 2 consecutive TRAF-type zinc fingers follow at residues 134–189 and 190–248; these read VHLK…IKLQ and KHED…QQIK. Glycyl lysine isopeptide (Lys-Gly) (interchain with G-Cter in ubiquitin) cross-links involve residues Lys-155 and Lys-167. The stretch at 266–337 forms a coiled coil; it reads SNSLEKKVSL…KLKELDKEIR (72 aa). A Glycyl lysine isopeptide (Lys-Gly) (interchain with G-Cter in ubiquitin) cross-link involves residue Lys-328. Residues 414-559 enclose the MATH domain; it reads NGVLIWKIRD…DDTIFIKVIV (146 aa).

Belongs to the TNF receptor-associated factor family. A subfamily. In terms of assembly, homotrimer. Heterotrimer with TRAF2 and TRAF5. Interacts with LTBR/TNFRSF3, TNFRSF4, TNFRSF5/CD40, TNFRSF8/CD30, TNFRSF13C TNFRSF17/BCMA, TLR4 and EDAR. Interacts with MAP3K5, MAP3K14, TRAIP/TRIP, TDP2/TTRAP, TANK/ITRAF and TRAF3IP1. Interaction with TNFRSF5/CD40 is modulated by TANK/ITRAF, which competes for the same binding site. Interacts with TICAM1. Interacts with TRAFD1. Interacts with OTUB1, OTUB2 and OTUD5. Interacts with RNF216, OPTN and TBK1. Identified in a complex with TRAF2, MAP3K14 and BIRC3. Upon exposure to bacterial lipopolysaccharide (LPS), recruited to a transient complex containing TLR4, TRAF3, TRAF6, IKBKG, MAP3K7, MYD88, TICAM1, BIRC2, BIRC3 and UBE2N. Interacts (via RING-type zinc finger domain) with SRC. Interacts with CARD14. Interacts (via MATH domain) with PTPN22; the interaction promotes TRAF3 polyubiquitination. Interacts with MAVS. Directly interacts with DDX3X; this interaction stimulates TRAF3 'Lys-63' ubiquitination. Interacts with IRF3. Interacts with IKBKE in the course of viral infection. Interacts with TRIM35. Interacts with GAPDH; promoting TRAF3 ubiquitination. Interacts with PPP3CA and PPP3CB. Interacts with RALGDS. Interacts with FBXO11. Post-translationally, undergoes 'Lys-48'-linked polyubiquitination, leading to its proteasomal degradation in response to signaling by TNFSF13B, TLR4 or through CD40. 'Lys-48'-linked polyubiquitinated form is deubiquitinated by OTUD7B, preventing TRAF3 proteolysis and over-activation of non-canonical NF-kappa-B. Undergoes 'Lys-63'-linked ubiquitination during early stages of virus infection, and 'Lys-48'-linked ubiquitination during later stages. Undergoes both 'Lys-48'-linked and 'Lys-63'-linked ubiquitination in response to TLR3 and TLR4 signaling. 'Lys-63'-linked ubiquitination can be mediated by TRIM35. Deubiquitinated by OTUB1, OTUB2 and OTUD5. Undergoes 'Lys-63'-linked deubiquitination by MYSM1 to terminate the pattern-recognition receptors/PRRs pathways. Ubiquitinated at Lys-328 by the SCF(FBXL2) complex, leading to its degradation by the proteasome. In terms of processing, undergoes 'Lys-48'-linked polyubiquitination, leading to its proteasomal degradation in response to signaling by TNFSF13B, TLR4 or through CD40. 'Lys-48'-linked polyubiquitinated form is deubiquitinated by OTUD7B, preventing TRAF3 proteolysis and over-activation of non-canonical NF-kappa-B. Undergoes 'Lys-63'-linked ubiquitination during early stages of virus infection, and 'Lys-48'-linked ubiquitination during later stages. Undergoes both 'Lys-48'-linked and 'Lys-63'-linked ubiquitination in response to TLR3 and TLR4 signaling. 'Lys-63'-linked ubiquitination can be mediated by TRIM35. Deubiquitinated by OTUB1, OTUB2 and OTUD5. Undergoes 'Lys-63'-linked deubiquitination by MYSM1 to terminate the pattern-recognition receptors/PRRs pathways. Also undergoes 'Lys-29'-linked ubiquitination on Cys-55 and Cys-123 by NEDD4L; leading to increased 'Lys-48'- and 'Lys-63'-linked ubiquitination as well as increased binding to TBK1. TLR4 signals emanating from bacteria containing vesicles trigger 'Lys-33'-linked polyubiquitination that promotes the assembly of the exocyst complex thereby connecting innate immune signaling to the cellular trafficking apparatus. Deubiquitinated by USP25 during viral infection, leading to TRAF3 stabilization and type I interferon production. 'Lys-63'-linked ubiquitination by FBXO11 in a NEDD8-dependent manner promotes the amplification of IFN-I signaling. In terms of tissue distribution, detected in bone marrow macrophages and spleen B-cells (at protein level). In adult, highest in brain. Also found in kidney, heart, thymus, spleen, lung, muscle, testis and ovary. Not found in liver.

Its subcellular location is the cytoplasm. It is found in the endosome. The protein resides in the mitochondrion. The enzyme catalyses S-ubiquitinyl-[E2 ubiquitin-conjugating enzyme]-L-cysteine + [acceptor protein]-L-lysine = [E2 ubiquitin-conjugating enzyme]-L-cysteine + N(6)-ubiquitinyl-[acceptor protein]-L-lysine.. Cytoplasmic E3 ubiquitin ligase that regulates various signaling pathways, such as the NF-kappa-B, mitogen-activated protein kinase (MAPK) and interferon regulatory factor (IRF) pathways, and thus controls a lot of biological processes in both immune and non-immune cell types. In TLR and RLR signaling pathways, acts as an E3 ubiquitin ligase promoting the synthesis of 'Lys-63'-linked polyubiquitin chains on several substrates such as ASC that lead to the activation of the type I interferon response or the inflammasome. Following the activation of certain TLRs such as TLR4, acts as a negative NF-kappa-B regulator, possibly to avoid unregulated inflammatory response, and its degradation via 'Lys-48'-linked polyubiquitination is required for MAPK activation and production of inflammatory cytokines. Alternatively, when TLR4 orchestrates bacterial expulsion, TRAF3 undergoes 'Lys-33'-linked polyubiquitination and subsequently binds to RALGDS, mobilizing the exocyst complex to rapidly expel intracellular bacteria back for clearance. Also acts as a constitutive negative regulator of the alternative NF-kappa-B pathway, which controls B-cell survival and lymphoid organ development. Required for normal antibody isotype switching from IgM to IgG. Plays a role T-cell dependent immune responses. Down-regulates proteolytic processing of NFKB2, and thereby inhibits non-canonical activation of NF-kappa-B. Promotes ubiquitination and proteasomal degradation of MAP3K14. The protein is TNF receptor-associated factor 3 of Mus musculus (Mouse).